The chain runs to 303 residues: Protoheme IX farnesyltransferase (303 aa).

Transmembrane regions (helical) follow at residues 25 to 45 (MGLV…AVVM), 54 to 74 (IPQI…ACAL), 104 to 124 (LLLL…LLNI), 125 to 145 (PSGV…SIWS), 151 to 171 (WNTV…WVAI), 179 to 199 (AIAL…ALAI), 227 to 247 (FIWL…GVVF), 248 to 268 (VVLA…TFKK), and 280 to 300 (FIYS…VSLL).

It belongs to the UbiA prenyltransferase family. Protoheme IX farnesyltransferase subfamily. As to quaternary structure, interacts with CtaA.

Its subcellular location is the cell membrane. It catalyses the reaction heme b + (2E,6E)-farnesyl diphosphate + H2O = Fe(II)-heme o + diphosphate. The protein operates within porphyrin-containing compound metabolism; heme O biosynthesis; heme O from protoheme: step 1/1. Its function is as follows. Converts heme B (protoheme IX) to heme O by substitution of the vinyl group on carbon 2 of heme B porphyrin ring with a hydroxyethyl farnesyl side group. The protein is Protoheme IX farnesyltransferase of Staphylococcus aureus (strain Mu3 / ATCC 700698).